A 164-amino-acid chain; its full sequence is S-ribosylhomocysteine lyase (164 aa).

Fe cation-binding residues include His54, His58, and Cys128.

The protein belongs to the LuxS family. Homodimer. It depends on Fe cation as a cofactor.

The catalysed reaction is S-(5-deoxy-D-ribos-5-yl)-L-homocysteine = (S)-4,5-dihydroxypentane-2,3-dione + L-homocysteine. In terms of biological role, involved in the synthesis of autoinducer 2 (AI-2) which is secreted by bacteria and is used to communicate both the cell density and the metabolic potential of the environment. The regulation of gene expression in response to changes in cell density is called quorum sensing. Catalyzes the transformation of S-ribosylhomocysteine (RHC) to homocysteine (HC) and 4,5-dihydroxy-2,3-pentadione (DPD). The chain is S-ribosylhomocysteine lyase from Campylobacter jejuni subsp. jejuni serotype O:6 (strain 81116 / NCTC 11828).